A 454-amino-acid chain; its full sequence is tRNA modification GTPase MnmE (454 aa).

(6S)-5-formyl-5,6,7,8-tetrahydrofolate-binding residues include Arg-23, Glu-80, and Lys-120. A TrmE-type G domain is found at 216-377; sequence GMKVVIAGKP…LRTHLKQSMG (162 aa). Asn-226 lines the K(+) pocket. GTP contacts are provided by residues 226–231, 245–251, 270–273, and 335–338; these read NAGKSS, TAIAGTT, DTAG, and NKAD. Ser-230 serves as a coordination point for Mg(2+). The K(+) site is built by Thr-245, Ile-247, and Thr-250. A Mg(2+)-binding site is contributed by Thr-251. Lys-454 contributes to the (6S)-5-formyl-5,6,7,8-tetrahydrofolate binding site.

The protein belongs to the TRAFAC class TrmE-Era-EngA-EngB-Septin-like GTPase superfamily. TrmE GTPase family. In terms of assembly, homodimer. Heterotetramer of two MnmE and two MnmG subunits. K(+) is required as a cofactor.

It localises to the cytoplasm. Functionally, exhibits a very high intrinsic GTPase hydrolysis rate. Involved in the addition of a carboxymethylaminomethyl (cmnm) group at the wobble position (U34) of certain tRNAs, forming tRNA-cmnm(5)s(2)U34. This Sodalis glossinidius (strain morsitans) protein is tRNA modification GTPase MnmE.